The chain runs to 285 residues: Casein kinase II subunit beta-2 (285 aa).

A disordered region spans residues 226 to 285 (FKDAEDEAELDDDDEEEEEEEEEEEELAAMDEAEGAQQQHAAAAAGTATGGVAAGGEGVH). The segment covering 229–259 (AEDEAELDDDDEEEEEEEEEEEELAAMDEAE) has biased composition (acidic residues). A compositionally biased stretch (low complexity) spans 260 to 272 (GAQQQHAAAAAGT). A compositionally biased stretch (gly residues) spans 273–285 (ATGGVAAGGEGVH).

This sequence belongs to the casein kinase 2 subunit beta family. Tetramer composed of two alpha chains, one beta chain and one beta' chain. Phosphorylated by alpha subunit.

Functionally, regulatory subunit of casein kinase II/CK2. As part of the kinase complex regulates the basal catalytic activity of the alpha subunit a constitutively active serine/threonine-protein kinase that phosphorylates a large number of substrates containing acidic residues C-terminal to the phosphorylated serine or threonine. This Neurospora crassa (strain ATCC 24698 / 74-OR23-1A / CBS 708.71 / DSM 1257 / FGSC 987) protein is Casein kinase II subunit beta-2 (ckb-2).